The sequence spans 101 residues: 2-amino-4-ketopentanoate thiolase alpha subunit (101 aa).

This sequence belongs to the OrtA family. Heterodimer with OrtB.

The enzyme catalyses D-alanine + acetyl-CoA = (2R)-2-amino-4-oxopentanoate + CoA. In terms of biological role, involved in the ornithine fermentation pathway. Catalyzes the thiolytic cleavage of 2-amino-4-ketopentanoate (AKP) with coenzyme A (CoA) to form acetyl-CoA and alanine. It is strictly specific for AKP. This is 2-amino-4-ketopentanoate thiolase alpha subunit from Unknown prokaryotic organism.